A 298-amino-acid polypeptide reads, in one-letter code: N-acetylmuramic acid 6-phosphate etherase (298 aa).

In terms of domain architecture, SIS spans Thr54 to Lys217. Glu82 serves as the catalytic Proton donor. Glu113 is a catalytic residue.

The protein belongs to the GCKR-like family. MurNAc-6-P etherase subfamily. Homodimer.

The enzyme catalyses N-acetyl-D-muramate 6-phosphate + H2O = N-acetyl-D-glucosamine 6-phosphate + (R)-lactate. The protein operates within amino-sugar metabolism; N-acetylmuramate degradation. Its function is as follows. Specifically catalyzes the cleavage of the D-lactyl ether substituent of MurNAc 6-phosphate, producing GlcNAc 6-phosphate and D-lactate. In Halalkalibacterium halodurans (strain ATCC BAA-125 / DSM 18197 / FERM 7344 / JCM 9153 / C-125) (Bacillus halodurans), this protein is N-acetylmuramic acid 6-phosphate etherase.